The following is a 165-amino-acid chain: Small ribosomal subunit protein eS10 (165 aa).

Phosphotyrosine is present on Y12. The disordered stretch occupies residues 90–165; that stretch reads VPATLRRSRP…FGRGRGQPPQ (76 aa). Residues 97 to 128 show a composition bias toward basic and acidic residues; it reads SRPETGRPRPKGPEGERPARFTRGEADRDTYR. Residues K138 and K139 each participate in a glycyl lysine isopeptide (Lys-Gly) (interchain with G-Cter in ubiquitin) cross-link. S146 is subject to Phosphoserine. R153 carries the post-translational modification Omega-N-methylarginine. Residues 154-165 show a composition bias toward gly residues; that stretch reads GGFGRGRGQPPQ. R158 and R160 each carry symmetric dimethylarginine.

The protein belongs to the eukaryotic ribosomal protein eS10 family. Component of the small ribosomal subunit. The methylated form interacts with NPM1. In terms of processing, methylated by PRMT5. Methylation is necessary for its interaction with NPS1, its localization in the granular component (GC) region of the nucleolus, for the proper assembly of ribosomes, protein synthesis and optimal cell proliferation. Post-translationally, monoubiquitinated by ZNF598 when a ribosome has stalled during translation of poly(A) sequences, leading to preclude synthesis of a long poly-lysine tail and initiate the ribosome quality control (RQC) pathway to degrade the potentially detrimental aberrant nascent polypeptide. Deubiquitinated by OTUD3 and USP21, antagonizing ZNF598 activity. Deubiquitinated by OTUD1, antagonizing ZNF598 activity and stimulating formation of polysomes: deubiquitination by OTUD1 promotes stability and translation of a subset mRNAs with a high abundance of rare codons can limit the translation rate. Deubiquitinated by USP10.

The protein resides in the cytoplasm. Its subcellular location is the nucleus. It is found in the nucleolus. Functionally, component of the 40S ribosomal subunit. The ribosome is a large ribonucleoprotein complex responsible for the synthesis of proteins in the cell. This is Small ribosomal subunit protein eS10 (Rps10) from Rattus norvegicus (Rat).